A 323-amino-acid chain; its full sequence is Flavone synthase cfoJ (323 aa).

The cofactor is FMN.

The protein operates within secondary metabolite biosynthesis; flavonoid biosynthesis. Its function is as follows. FMN-dependent oxidoreductase; part of the gene cluster that mediates the biosynthesis of chlorflavonin, a fungal flavonoid with acetolactate synthase inhibitory activity. Within the pathway, cfoJ acts as a flavone synthase (FNS) and catalyzes the formation of a double bond between C2 and C3, converting the flavanone into a flavone. The pathway begins with the PKS-NRPS hybrid synthetase cfoA that uses benzoic acid or p-hydroxybenzoic acid as a starter unit with four rounds of chain elongation using malonyl-CoA to form the chalcone skeleton. Then, a new type of chalcone isomerase, cfoK, catalyzes the conversion of the chalcone into a flavanone by a histidine-mediated oxa-Michael addition mechanism. The desaturation of flavanone to flavone is catalyzed by a new type of flavone synthase, the flavin mononucleotide (FMN)-dependent oxidoreductase cfoJ. Monooxygenases cfoF, cfoG, and P450 cfoH are responsible for the hydroxylation of the flavonoid skeleton at sites C3, C8, and C2', respectively. Like cfoF, the dehydratase cfoI plays also a role in the hydroxylation of position C3. Methyltransferases cfoB, cfoC, and cfoD then catalyze the methylation of C7-OH, C8-OH, and C3-OH, respectively. Finally, the monooxygenase cfoE is responsible for the chlorination of flavonoid at position C3'. This Aspergillus candidus protein is Flavone synthase cfoJ.